Consider the following 297-residue polypeptide: Leucine-rich repeat-containing protein 25 (297 aa).

Positions 1 to 25 are cleaved as a signal peptide; it reads MGSIRTRLLWLCLLMLLALLHKSGS. Topologically, residues 26 to 169 are extracellular; the sequence is QDLTCMVHPS…SCPPSWGPGT (144 aa). N-linked (GlcNAc...) asparagine glycans are attached at residues asparagine 44 and asparagine 49. LRR repeat units follow at residues 66-89 and 90-113; these read HAQV…DKLE and KLQT…LRCD. N-linked (GlcNAc...) asparagine glycosylation is found at asparagine 133 and asparagine 152. A helical transmembrane segment spans residues 170-190; it reads IGALVAGTISLAVAVSGSVLA. Residues 191-297 are Cytoplasmic-facing; that stretch reads WRLLRRRRRA…VYCNLESLGR (107 aa). The segment at 202–244 is disordered; it reads EHSLSKAQMSPHDIPKPVTDFLPRYSSRRPGPKAPDSPPSRFT. A phosphoserine mark is found at serine 211, serine 238, and serine 267. Tyrosine 289 is modified (phosphotyrosine).

As to quaternary structure, interacts with RIGI. Interacts with SQSTM1. Interacts with p65/RELA; this interaction promotes the degradation of RELA through autophagy.

Its subcellular location is the membrane. It localises to the cytoplasm. Its function is as follows. Plays a role in the inhibition of RLR-mediated type I interferon signaling pathway by targeting RIGI for autophagic degradation. Interacts specifically with ISG15-associated RIGI to promote interaction between RIGI and the autophagic cargo receptor p62/SQSTM1 to mediate RIGI degradation via selective autophagy. Plays also a role in the inhibition of NF-kappa-B signaling pathway and inflammatory response by promoting the degradation of p65/RELA. This is Leucine-rich repeat-containing protein 25 (Lrrc25) from Mus musculus (Mouse).